A 348-amino-acid chain; its full sequence is Beta-hexosaminidase (348 aa).

Substrate-binding positions include aspartate 62, arginine 70, arginine 134, and 164 to 165; that span reads KH. Histidine 177 acts as the Proton donor/acceptor in catalysis. The active-site Nucleophile is the aspartate 249.

It belongs to the glycosyl hydrolase 3 family. NagZ subfamily.

The protein resides in the cytoplasm. It carries out the reaction Hydrolysis of terminal non-reducing N-acetyl-D-hexosamine residues in N-acetyl-beta-D-hexosaminides.. It functions in the pathway cell wall biogenesis; peptidoglycan recycling. In terms of biological role, plays a role in peptidoglycan recycling by cleaving the terminal beta-1,4-linked N-acetylglucosamine (GlcNAc) from peptide-linked peptidoglycan fragments, giving rise to free GlcNAc, anhydro-N-acetylmuramic acid and anhydro-N-acetylmuramic acid-linked peptides. This is Beta-hexosaminidase from Histophilus somni (strain 2336) (Haemophilus somnus).